The primary structure comprises 203 residues: Putative 3-methyladenine DNA glycosylase (203 aa).

This sequence belongs to the DNA glycosylase MPG family.

This chain is Putative 3-methyladenine DNA glycosylase, found in Clostridium botulinum (strain Loch Maree / Type A3).